Reading from the N-terminus, the 599-residue chain is Group II intron-encoded protein LtrA (599 aa).

Residues 70-361 (IIQSLKDGTY…QPARFLGYDI (292 aa)) enclose the Reverse transcriptase domain. Residues 381–549 (NGSVELLIPL…AKCCELCGTS (169 aa)) form an intron maturase type-2 region.

This sequence in the N-terminal section; belongs to the bacterial reverse transcriptase family. In terms of assembly, homodimer. The cofactor is Mg(2+).

It catalyses the reaction DNA(n) + a 2'-deoxyribonucleoside 5'-triphosphate = DNA(n+1) + diphosphate. Its function is as follows. Multifunctional protein that promotes group II intron splicing and mobility by acting both on RNA and DNA. It has three activities: reverse transcriptase (RT) for intron duplication, maturase to promote splicing, and DNA endonuclease for site-specific cleavage of recipient alleles. The intron-encoded protein promotes splicing by facilitating the formation of the catalytically active structure of the intron RNA. After splicing, the protein remains bound to the excised intron lariat RNA, forming ribonucleoprotein particles, and cleaving the antisense strand of the recipient DNA in the 3' exon. After DNA cleavage, retrohoming occurs by a target DNA-primed reverse transcription of the intron RNA that had reverse spliced into the sense strand of the recipient DNA. It also contributes to the recognition of the DNA target site and acts as a repressor of its own translation. The protein is Group II intron-encoded protein LtrA (ltrA) of Lactococcus lactis subsp. cremoris (Streptococcus cremoris).